A 306-amino-acid chain; its full sequence is Acetyl-coenzyme A carboxylase carboxyl transferase subunit beta (306 aa).

Positions 27 to 296 constitute a CoA carboxyltransferase N-terminal domain; it reads LWHKCPSCEA…PRFVAPVIEP (270 aa). 4 residues coordinate Zn(2+): cysteine 31, cysteine 34, cysteine 50, and cysteine 53. Residues 31–53 form a C4-type zinc finger; it reads CPSCEAVLYRPELEKTLDVCPKC.

It belongs to the AccD/PCCB family. Acetyl-CoA carboxylase is a heterohexamer composed of biotin carboxyl carrier protein (AccB), biotin carboxylase (AccC) and two subunits each of ACCase subunit alpha (AccA) and ACCase subunit beta (AccD). Zn(2+) is required as a cofactor.

It localises to the cytoplasm. It carries out the reaction N(6)-carboxybiotinyl-L-lysyl-[protein] + acetyl-CoA = N(6)-biotinyl-L-lysyl-[protein] + malonyl-CoA. Its pathway is lipid metabolism; malonyl-CoA biosynthesis; malonyl-CoA from acetyl-CoA: step 1/1. Component of the acetyl coenzyme A carboxylase (ACC) complex. Biotin carboxylase (BC) catalyzes the carboxylation of biotin on its carrier protein (BCCP) and then the CO(2) group is transferred by the transcarboxylase to acetyl-CoA to form malonyl-CoA. The sequence is that of Acetyl-coenzyme A carboxylase carboxyl transferase subunit beta from Pseudomonas savastanoi pv. phaseolicola (strain 1448A / Race 6) (Pseudomonas syringae pv. phaseolicola (strain 1448A / Race 6)).